The chain runs to 198 residues: Ribosomal RNA small subunit methyltransferase G (198 aa).

S-adenosyl-L-methionine contacts are provided by residues glycine 74, phenylalanine 79, 123–124 (IQ), and arginine 136.

The protein belongs to the methyltransferase superfamily. RNA methyltransferase RsmG family.

It is found in the cytoplasm. It catalyses the reaction guanosine(527) in 16S rRNA + S-adenosyl-L-methionine = N(7)-methylguanosine(527) in 16S rRNA + S-adenosyl-L-homocysteine. In terms of biological role, specifically methylates the N7 position of guanine in position 527 of 16S rRNA. The polypeptide is Ribosomal RNA small subunit methyltransferase G (Orientia tsutsugamushi (strain Boryong) (Rickettsia tsutsugamushi)).